A 382-amino-acid polypeptide reads, in one-letter code: U11/U12 small nuclear ribonucleoprotein 59 kDa protein (382 aa).

Positions 31 to 63 (NTKNITDQLKQLQDTLNLAKSMEKELEALKMIK) form a coiled coil. The tract at residues 274–297 (SEENTTLTTSNKTNNDTDKDSNTN) is disordered. Positions 277 to 287 (NTTLTTSNKTN) are enriched in low complexity.

As to quaternary structure, component of the U11/U12 snRNPs that are part of the U12-type spliceosome.

The protein resides in the nucleus. This chain is U11/U12 small nuclear ribonucleoprotein 59 kDa protein (SNRNP59), found in Arabidopsis thaliana (Mouse-ear cress).